A 291-amino-acid polypeptide reads, in one-letter code: Small ribosomal subunit protein uS3 (291 aa).

The region spanning 39–110 (IRLEIMKFLK…KISIKIKEVK (72 aa)) is the KH type-2 domain.

It belongs to the universal ribosomal protein uS3 family. Part of the 30S ribosomal subunit. Forms a tight complex with proteins S10 and S14.

Binds the lower part of the 30S subunit head. Binds mRNA in the 70S ribosome, positioning it for translation. In Borreliella afzelii (strain PKo) (Borrelia afzelii), this protein is Small ribosomal subunit protein uS3.